Reading from the N-terminus, the 51-residue chain is Protein 1.4 (51 aa).

A signal peptide spans 1 to 23; that stretch reads MFKKVGKFLAALAAILTLAYILA. Residues 28–48 traverse the membrane as a helical segment; sequence VALVVVGACYLAAVCACVWSI.

The protein resides in the host membrane. This chain is Protein 1.4, found in Escherichia coli (Bacteriophage T7).